We begin with the raw amino-acid sequence, 38 residues long: Photosystem II reaction center protein L (38 aa).

The helical transmembrane segment at 17–37 (SLFLGRLLIFVLGILFSSYIF) threads the bilayer.

It belongs to the PsbL family. As to quaternary structure, PSII is composed of 1 copy each of membrane proteins PsbA, PsbB, PsbC, PsbD, PsbE, PsbF, PsbH, PsbI, PsbJ, PsbK, PsbL, PsbM, PsbT, PsbX, PsbY, PsbZ, Psb30/Ycf12, peripheral proteins PsbO, CyanoQ (PsbQ), PsbU, PsbV and a large number of cofactors. It forms dimeric complexes.

Its subcellular location is the cellular thylakoid membrane. Functionally, one of the components of the core complex of photosystem II (PSII). PSII is a light-driven water:plastoquinone oxidoreductase that uses light energy to abstract electrons from H(2)O, generating O(2) and a proton gradient subsequently used for ATP formation. It consists of a core antenna complex that captures photons, and an electron transfer chain that converts photonic excitation into a charge separation. This subunit is found at the monomer-monomer interface and is required for correct PSII assembly and/or dimerization. The protein is Photosystem II reaction center protein L of Prochlorothrix hollandica.